A 689-amino-acid polypeptide reads, in one-letter code: ATP-dependent zinc metalloprotease FtsH 2 (689 aa).

Topologically, residues 1 to 3 are cytoplasmic; that stretch reads MRK. A helical transmembrane segment spans residues 4–24; the sequence is FFRGASFYILAFIIILFIVQN. Over 25–111 the chain is Extracellular; sequence FGRPTQEIDE…SAAPPPTTPW (87 aa). Residues 112–132 form a helical membrane-spanning segment; sequence FIELLPSIFMVLIFIVFWFVF. At 133-689 the chain is on the cytoplasmic side; the sequence is MQQSQGGGNR…QDNEENRKEE (557 aa). 205-212 lines the ATP pocket; that stretch reads GPPGTGKT. His427 contributes to the Zn(2+) binding site. The active site involves Glu428. Positions 431 and 503 each coordinate Zn(2+). Residues 661–673 show a composition bias toward basic and acidic residues; that stretch reads EELIEVSSDKEEE. A disordered region spans residues 661–689; that stretch reads EELIEVSSDKEEEKDNQDDQDNEENRKEE.

The protein in the central section; belongs to the AAA ATPase family. This sequence in the C-terminal section; belongs to the peptidase M41 family. Homohexamer. The cofactor is Zn(2+).

The protein resides in the cell membrane. In terms of biological role, acts as a processive, ATP-dependent zinc metallopeptidase for both cytoplasmic and membrane proteins. Plays a role in the quality control of integral membrane proteins. The sequence is that of ATP-dependent zinc metalloprotease FtsH 2 from Alkaliphilus metalliredigens (strain QYMF).